We begin with the raw amino-acid sequence, 139 residues long: ATP synthase epsilon chain (139 aa).

Residues 89-110 are disordered; it reads EARAEQARAEAEARRREAQSER.

Belongs to the ATPase epsilon chain family. As to quaternary structure, F-type ATPases have 2 components, CF(1) - the catalytic core - and CF(0) - the membrane proton channel. CF(1) has five subunits: alpha(3), beta(3), gamma(1), delta(1), epsilon(1). CF(0) has three main subunits: a, b and c.

Its subcellular location is the cell membrane. Its function is as follows. Produces ATP from ADP in the presence of a proton gradient across the membrane. This is ATP synthase epsilon chain from Chloroflexus aurantiacus (strain ATCC 29366 / DSM 635 / J-10-fl).